Consider the following 209-residue polypeptide: Uracil phosphoribosyltransferase (209 aa).

5-phospho-alpha-D-ribose 1-diphosphate is bound by residues Arg-79, Arg-104, and 131-139 (DPMLATGGS). Uracil contacts are provided by residues Ile-194 and 199–201 (GDA). Asp-200 is a binding site for 5-phospho-alpha-D-ribose 1-diphosphate.

The protein belongs to the UPRTase family. Mg(2+) is required as a cofactor.

It carries out the reaction UMP + diphosphate = 5-phospho-alpha-D-ribose 1-diphosphate + uracil. It functions in the pathway pyrimidine metabolism; UMP biosynthesis via salvage pathway; UMP from uracil: step 1/1. With respect to regulation, allosterically activated by GTP. In terms of biological role, catalyzes the conversion of uracil and 5-phospho-alpha-D-ribose 1-diphosphate (PRPP) to UMP and diphosphate. The protein is Uracil phosphoribosyltransferase of Oceanobacillus iheyensis (strain DSM 14371 / CIP 107618 / JCM 11309 / KCTC 3954 / HTE831).